Reading from the N-terminus, the 413-residue chain is Acetate kinase (413 aa).

Residue Asn-7 participates in Mg(2+) binding. Position 14 (Lys-14) interacts with ATP. Position 98 (Arg-98) interacts with substrate. Asp-157 functions as the Proton donor/acceptor in the catalytic mechanism. Residues 216-220, 291-293, and 339-343 contribute to the ATP site; these read HIGNG, DLR, and GVGEN. Glu-392 is a Mg(2+) binding site.

It belongs to the acetokinase family. As to quaternary structure, homodimer. The cofactor is Mg(2+). Requires Mn(2+) as cofactor.

It localises to the cytoplasm. It carries out the reaction acetate + ATP = acetyl phosphate + ADP. Its pathway is metabolic intermediate biosynthesis; acetyl-CoA biosynthesis; acetyl-CoA from acetate: step 1/2. Its function is as follows. Catalyzes the formation of acetyl phosphate from acetate and ATP. Can also catalyze the reverse reaction. The protein is Acetate kinase of Synechocystis sp. (strain ATCC 27184 / PCC 6803 / Kazusa).